The primary structure comprises 79 residues: Small ribosomal subunit protein uS17 (79 aa).

This sequence belongs to the universal ribosomal protein uS17 family. As to quaternary structure, part of the 30S ribosomal subunit.

In terms of biological role, one of the primary rRNA binding proteins, it binds specifically to the 5'-end of 16S ribosomal RNA. This is Small ribosomal subunit protein uS17 from Orientia tsutsugamushi (strain Boryong) (Rickettsia tsutsugamushi).